A 378-amino-acid polypeptide reads, in one-letter code: Erythronate-4-phosphate dehydrogenase (378 aa).

2 residues coordinate substrate: Ser-45 and Thr-66. Positions 146 and 175 each coordinate NAD(+). Residue Arg-208 is part of the active site. Asp-232 provides a ligand contact to NAD(+). Glu-237 is an active-site residue. His-254 functions as the Proton donor in the catalytic mechanism. Gly-257 is an NAD(+) binding site. Residue Tyr-258 coordinates substrate.

It belongs to the D-isomer specific 2-hydroxyacid dehydrogenase family. PdxB subfamily. In terms of assembly, homodimer.

The protein localises to the cytoplasm. The enzyme catalyses 4-phospho-D-erythronate + NAD(+) = (R)-3-hydroxy-2-oxo-4-phosphooxybutanoate + NADH + H(+). It participates in cofactor biosynthesis; pyridoxine 5'-phosphate biosynthesis; pyridoxine 5'-phosphate from D-erythrose 4-phosphate: step 2/5. Its function is as follows. Catalyzes the oxidation of erythronate-4-phosphate to 3-hydroxy-2-oxo-4-phosphonooxybutanoate. This is Erythronate-4-phosphate dehydrogenase from Escherichia coli O139:H28 (strain E24377A / ETEC).